The following is a 274-amino-acid chain: Non-heme haloperoxidase (274 aa).

Residues 22–254 form the AB hydrolase-1 domain; the sequence is PIMFHHGWPL…RLKVYPGLSH (233 aa). Active-site residues include Ser95, Asp225, and His254.

The protein belongs to the AB hydrolase superfamily. Bacterial non-heme haloperoxidase / perhydrolase family.

This is Non-heme haloperoxidase (thcF) from Rhodococcus erythropolis (Arthrobacter picolinophilus).